Here is a 148-residue protein sequence, read N- to C-terminus: Snaclec 27 (148 aa).

The N-terminal stretch at 1-23 is a signal peptide; the sequence is WGDSSSSASACWSCFSLVSGIGA. 3 disulfides stabilise this stretch: C27–C38, C55–C144, and C121–C136. A C-type lectin domain is found at 34–145; it reads HEGHCYKVFS…CSSTQQFVCK (112 aa).

It belongs to the snaclec family. In terms of assembly, heterodimer; disulfide-linked. As to expression, expressed by the venom gland.

The protein resides in the secreted. Interferes with one step of hemostasis (modulation of platelet aggregation, or coagulation cascade, for example). This is Snaclec 27 from Echis ocellatus (Ocellated saw-scaled viper).